A 229-amino-acid chain; its full sequence is Heptaprenylglyceryl phosphate synthase (229 aa).

Lys-12 contacts sn-glycerol 1-phosphate. Mg(2+) is bound by residues Asp-14 and Ser-40. Residues 159-164 (YLEYSG), Gly-189, and 209-210 (GN) contribute to the sn-glycerol 1-phosphate site.

It belongs to the GGGP/HepGP synthase family. Group I subfamily. Homodimer. It depends on Mg(2+) as a cofactor.

It catalyses the reaction sn-glycerol 1-phosphate + all-trans-heptaprenyl diphosphate = 3-heptaprenyl-sn-glycero-1-phosphate + diphosphate. Its pathway is membrane lipid metabolism; glycerophospholipid metabolism. Functionally, prenyltransferase that catalyzes in vivo the transfer of the heptaprenyl moiety of heptaprenyl pyrophosphate (HepPP; 35 carbon atoms) to the C3 hydroxyl of sn-glycerol-1-phosphate (G1P), producing heptaprenylglyceryl phosphate (HepGP). This reaction is an ether-bond-formation step in the biosynthesis of archaea-type G1P-based membrane lipids found in Bacillales. The chain is Heptaprenylglyceryl phosphate synthase from Bacillus thuringiensis (strain Al Hakam).